A 259-amino-acid polypeptide reads, in one-letter code: 5'-nucleotidase SurE (259 aa).

Residues D8, D9, S40, and N92 each coordinate a divalent metal cation.

It belongs to the SurE nucleotidase family. A divalent metal cation is required as a cofactor.

The protein resides in the cytoplasm. The enzyme catalyses a ribonucleoside 5'-phosphate + H2O = a ribonucleoside + phosphate. Its function is as follows. Nucleotidase that shows phosphatase activity on nucleoside 5'-monophosphates. This Xanthomonas axonopodis pv. citri (strain 306) protein is 5'-nucleotidase SurE.